Here is a 529-residue protein sequence, read N- to C-terminus: Beta-hexosaminidase subunit alpha (529 aa).

A signal peptide spans 1–22 (MAGSTLRFSLLLAAAFAGRATA). Positions 23 to 88 (LWPWPQYIQT…RFPHPIEKRH (66 aa)) are excised as a propeptide. Cys58 and Cys104 are oxidised to a cystine. Residues Asn115, Asn157, and Asn295 are each glycosylated (N-linked (GlcNAc...) asparagine). An intrachain disulfide couples Cys277 to Cys328. Glu323 functions as the Proton donor in the catalytic mechanism. Positions 423–424 (NH) are critical for hydrolysis GM2 gangliosides. Cys505 and Cys522 are joined by a disulfide.

Belongs to the glycosyl hydrolase 20 family. In terms of assembly, there are 3 beta-hexosaminidase isozymes: isozyme A (hexosaminidase A) is a heterodimer composed of one subunit alpha and one subunit beta (chain A and B); isozyme B (hexosaminidase B) is a homodimer of two beta subunits (two chains A and B); isozyme S (hexosaminidase S) is a homodimer of two alpha subunits. The composition of the dimer (isozyme A versus isozyme S) has a significant effect on the substrate specificity of the alpha subunit active site.

It is found in the lysosome. The enzyme catalyses Hydrolysis of terminal non-reducing N-acetyl-D-hexosamine residues in N-acetyl-beta-D-hexosaminides.. The catalysed reaction is N-acetyl-beta-D-galactosaminyl-(1-&gt;4)-beta-D-3-sulfogalactosyl-(1-&gt;4)-beta-D-glucosyl-(1&lt;-&gt;1')-ceramide + H2O = a beta-D-3-sulfogalactosyl-(1-&gt;4)-beta-D-glucosyl-(1&lt;-&gt;1')-ceramide + N-acetyl-beta-D-galactosamine. It carries out the reaction a ganglioside GM2 (d18:1(4E)) + H2O = a ganglioside GM3 (d18:1(4E)) + N-acetyl-beta-D-galactosamine. It catalyses the reaction a ganglioside GM2 + H2O = a ganglioside GM3 + N-acetyl-beta-D-galactosamine. The enzyme catalyses beta-D-GalNAc-(1-&gt;4)-alpha-L-IdoA-(1-&gt;3)-beta-D-GalNAc-4-sulfate-(1-&gt;4)-alpha-L-IdoA-(1-&gt;3)-D-GalNAc-4-sulfate + H2O = alpha-L-IdoA-(1-&gt;3)-beta-D-GalNAc-4-sulfate-(1-&gt;4)-alpha-L-IdoA-(1-&gt;3)-D-GalNAc-4-sulfate + N-acetyl-D-galactosamine. The catalysed reaction is N-acetyl-beta-D-6-sulfogalactosaminyl-(1-&gt;4)-alpha-L-iduronyl-(1-&gt;3)-N-acetyl-D-6-sulfogalactosamine + H2O = alpha-L-iduronyl-(1-&gt;3)-N-acetyl-D-6-sulfogalactosamine + N-acetyl-D-6-sulfogalactosamine. Its activity is regulated as follows. Addition of GM2A stimulates the hydrolysis of sulfated glycosphingolipid SM2 and the ganglioside GM2. Its function is as follows. Hydrolyzes the non-reducing end N-acetyl-D-hexosamine and/or sulfated N-acetyl-D-hexosamine of glycoconjugates, such as the oligosaccharide moieties from proteins and neutral glycolipids, or from certain mucopolysaccharides. The isozyme S is as active as the isozyme A on the anionic bis-sulfated glycans, the chondroitin-6-sulfate trisaccharide (C6S-3), and the dermatan sulfate pentasaccharide, and the sulfated glycosphingolipid SM2. The isozyme B does not hydrolyze each of these substrates, however hydrolyzes efficiently neutral oligosaccharide. Only the isozyme A is responsible for the degradation of GM2 gangliosides in the presence of GM2A. The chain is Beta-hexosaminidase subunit alpha from Bos taurus (Bovine).